The primary structure comprises 405 residues: Imidazolonepropionase (405 aa).

His-73 and His-75 together coordinate Fe(3+). Zn(2+)-binding residues include His-73 and His-75. 4-imidazolone-5-propanoate-binding residues include Arg-82, Tyr-145, and His-178. Tyr-145 lines the N-formimidoyl-L-glutamate pocket. His-243 lines the Fe(3+) pocket. His-243 provides a ligand contact to Zn(2+). Gln-246 lines the 4-imidazolone-5-propanoate pocket. A Fe(3+)-binding site is contributed by Asp-318. Asp-318 serves as a coordination point for Zn(2+). N-formimidoyl-L-glutamate is bound by residues Asn-320 and Gly-322. Thr-323 contacts 4-imidazolone-5-propanoate.

The protein belongs to the metallo-dependent hydrolases superfamily. HutI family. Zn(2+) is required as a cofactor. Fe(3+) serves as cofactor.

The protein resides in the cytoplasm. The enzyme catalyses 4-imidazolone-5-propanoate + H2O = N-formimidoyl-L-glutamate. The protein operates within amino-acid degradation; L-histidine degradation into L-glutamate; N-formimidoyl-L-glutamate from L-histidine: step 3/3. Catalyzes the hydrolytic cleavage of the carbon-nitrogen bond in imidazolone-5-propanoate to yield N-formimidoyl-L-glutamate. It is the third step in the universal histidine degradation pathway. In Brucella suis biovar 1 (strain 1330), this protein is Imidazolonepropionase.